The primary structure comprises 315 residues: Olfactory receptor 10H2 (315 aa).

The Extracellular portion of the chain corresponds to methionine 1–leucine 25. N-linked (GlcNAc...) asparagine glycosylation is present at asparagine 5. Residues methionine 26–methionine 46 traverse the membrane as a helical segment. The Cytoplasmic segment spans residues alanine 47–serine 54. Residues leucine 55 to valine 75 traverse the membrane as a helical segment. Over alanine 76–serine 99 the chain is Extracellular. An intrachain disulfide couples cysteine 97 to cysteine 189. A helical membrane pass occupies residues glutamine 100–tyrosine 120. At aspartate 121–arginine 139 the chain is on the cytoplasmic side. A helical membrane pass occupies residues glycine 140 to threonine 160. The Extracellular segment spans residues serine 161–alanine 197. A helical transmembrane segment spans residues leucine 198–serine 218. At tyrosine 219–alanine 238 the chain is on the cytoplasmic side. A helical transmembrane segment spans residues phenylalanine 239–isoleucine 259. Topologically, residues tyrosine 260–aspartate 272 are extracellular. A helical transmembrane segment spans residues threonine 273–leucine 293. Residues arginine 294–threonine 315 are Cytoplasmic-facing.

It belongs to the G-protein coupled receptor 1 family.

The protein localises to the cell membrane. Its function is as follows. Odorant receptor. This is Olfactory receptor 10H2 (OR10H2) from Homo sapiens (Human).